Consider the following 94-residue polypeptide: C-C motif chemokine 26 (94 aa).

An N-terminal signal peptide occupies residues 1–23 (MKSFPVAFLVLLIFILSVHRGVT). 2 disulfide bridges follow: C33–C57 and C34–C73.

It belongs to the intercrine beta (chemokine CC) family. Monomer.

The protein resides in the secreted. Its function is as follows. Chemoattractant for eosinophils and basophils. Acts as a ligand for C-C chemokine receptor CCR3 which triggers Ca(2+) mobilization in eosinophils. Also acts as a ligand for CX3C chemokine receptor CX3CR1, inducing cell chemotaxis. The sequence is that of C-C motif chemokine 26 from Canis lupus familiaris (Dog).